Consider the following 55-residue polypeptide: MAKATTIKIKLLSTADTGTFYVTTKNSRTFTDKMTKTKYDPVVRKHVEFKETKIK.

This sequence belongs to the bacterial ribosomal protein bL33 family.

The polypeptide is Large ribosomal subunit protein bL33 (Agrobacterium fabrum (strain C58 / ATCC 33970) (Agrobacterium tumefaciens (strain C58))).